The sequence spans 751 residues: Translation initiation factor IF-2, chloroplastic (751 aa).

The interval 86-156 is disordered; the sequence is KKEKSKFRKD…KSKKQTSAKN (71 aa). The segment covering 93-106 has biased composition (basic and acidic residues); that stretch reads RKDEDYDSLKREDN. Over residues 129 to 143 the composition is skewed to low complexity; it reads VSNTNTLNKKNVVKS. Residues 250 to 423 form the tr-type G domain; the sequence is KRPPVIAIMG…ILVSEIEDLK (174 aa). Residues 259–266 form a G1 region; it reads GHVDHGKT. 259–266 contributes to the GTP binding site; it reads GHVDHGKT. Residues 284–288 form a G2 region; the sequence is GITQK. A G3 region spans residues 309–312; it reads DTPG. GTP contacts are provided by residues 309 to 313 and 363 to 366; these read DTPGH and NKID. The segment at 363 to 366 is G4; that stretch reads NKID. The segment at 399-401 is G5; it reads SAM.

The protein belongs to the TRAFAC class translation factor GTPase superfamily. Classic translation factor GTPase family. IF-2 subfamily.

Its subcellular location is the plastid. It localises to the chloroplast. Its function is as follows. One of the essential components for the initiation of protein synthesis. Protects formylmethionyl-tRNA from spontaneous hydrolysis and promotes its binding to the 30S ribosomal subunits. Also involved in the hydrolysis of GTP during the formation of the 70S ribosomal complex. The chain is Translation initiation factor IF-2, chloroplastic (infB) from Rhodomonas salina (Cryptomonas salina).